The primary structure comprises 270 residues: Bis(5'-nucleosyl)-tetraphosphatase, symmetrical (270 aa).

The protein belongs to the Ap4A hydrolase family.

It catalyses the reaction P(1),P(4)-bis(5'-adenosyl) tetraphosphate + H2O = 2 ADP + 2 H(+). Hydrolyzes diadenosine 5',5'''-P1,P4-tetraphosphate to yield ADP. The sequence is that of Bis(5'-nucleosyl)-tetraphosphatase, symmetrical from Actinobacillus pleuropneumoniae serotype 3 (strain JL03).